A 574-amino-acid polypeptide reads, in one-letter code: uncharacterized protein (574 aa).

11 consecutive transmembrane segments (helical) span residues 14–34, 54–74, 124–144, 205–225, 253–273, 323–343, 350–370, 403–423, 441–461, 485–505, and 520–540; these read FFPT…LFFG, VVPL…LGIV, WLMA…SDTA, ICKC…TGTI, SWMA…WFIV, LVIF…VIPG, KGYV…FIWP, FPWS…AVRV, MPFF…TEFS, PLYF…LPMA, and MIDM…ITAI. 2 N-linked (GlcNAc...) asparagine glycosylation sites follow: Asn565 and Asn569.

This sequence belongs to the SLC13A/DASS transporter (TC 2.A.47) family. NADC subfamily.

Its subcellular location is the membrane. This is an uncharacterized protein from Caenorhabditis elegans.